We begin with the raw amino-acid sequence, 695 residues long: Elongation factor G (695 aa).

A tr-type G domain is found at Glu-8–Thr-282. Residues Ala-17 to Thr-24, Asp-81 to His-85, and Asn-135 to Asp-138 each bind GTP.

Belongs to the TRAFAC class translation factor GTPase superfamily. Classic translation factor GTPase family. EF-G/EF-2 subfamily.

It is found in the cytoplasm. Functionally, catalyzes the GTP-dependent ribosomal translocation step during translation elongation. During this step, the ribosome changes from the pre-translocational (PRE) to the post-translocational (POST) state as the newly formed A-site-bound peptidyl-tRNA and P-site-bound deacylated tRNA move to the P and E sites, respectively. Catalyzes the coordinated movement of the two tRNA molecules, the mRNA and conformational changes in the ribosome. This Listeria innocua serovar 6a (strain ATCC BAA-680 / CLIP 11262) protein is Elongation factor G.